The primary structure comprises 288 residues: 4-hydroxy-3-methylbut-2-enyl diphosphate reductase (288 aa).

Residue Cys-13 coordinates [4Fe-4S] cluster. Residues His-41 and His-75 each contribute to the (2E)-4-hydroxy-3-methylbut-2-enyl diphosphate site. Dimethylallyl diphosphate contacts are provided by His-41 and His-75. Residues His-41 and His-75 each coordinate isopentenyl diphosphate. Position 97 (Cys-97) interacts with [4Fe-4S] cluster. His-130 is a (2E)-4-hydroxy-3-methylbut-2-enyl diphosphate binding site. His-130 serves as a coordination point for dimethylallyl diphosphate. An isopentenyl diphosphate-binding site is contributed by His-130. Glu-132 acts as the Proton donor in catalysis. Thr-168 serves as a coordination point for (2E)-4-hydroxy-3-methylbut-2-enyl diphosphate. Cys-199 is a [4Fe-4S] cluster binding site. Residues Ser-227, Ser-228, Asn-229, and Ser-271 each coordinate (2E)-4-hydroxy-3-methylbut-2-enyl diphosphate. Ser-227, Ser-228, Asn-229, and Ser-271 together coordinate dimethylallyl diphosphate. Residues Ser-227, Ser-228, Asn-229, and Ser-271 each contribute to the isopentenyl diphosphate site.

The protein belongs to the IspH family. The cofactor is [4Fe-4S] cluster.

The enzyme catalyses isopentenyl diphosphate + 2 oxidized [2Fe-2S]-[ferredoxin] + H2O = (2E)-4-hydroxy-3-methylbut-2-enyl diphosphate + 2 reduced [2Fe-2S]-[ferredoxin] + 2 H(+). It catalyses the reaction dimethylallyl diphosphate + 2 oxidized [2Fe-2S]-[ferredoxin] + H2O = (2E)-4-hydroxy-3-methylbut-2-enyl diphosphate + 2 reduced [2Fe-2S]-[ferredoxin] + 2 H(+). It participates in isoprenoid biosynthesis; dimethylallyl diphosphate biosynthesis; dimethylallyl diphosphate from (2E)-4-hydroxy-3-methylbutenyl diphosphate: step 1/1. It functions in the pathway isoprenoid biosynthesis; isopentenyl diphosphate biosynthesis via DXP pathway; isopentenyl diphosphate from 1-deoxy-D-xylulose 5-phosphate: step 6/6. Catalyzes the conversion of 1-hydroxy-2-methyl-2-(E)-butenyl 4-diphosphate (HMBPP) into a mixture of isopentenyl diphosphate (IPP) and dimethylallyl diphosphate (DMAPP). Acts in the terminal step of the DOXP/MEP pathway for isoprenoid precursor biosynthesis. This is 4-hydroxy-3-methylbut-2-enyl diphosphate reductase from Phocaeicola vulgatus (strain ATCC 8482 / DSM 1447 / JCM 5826 / CCUG 4940 / NBRC 14291 / NCTC 11154) (Bacteroides vulgatus).